Reading from the N-terminus, the 72-residue chain is Translation initiation factor IF-1 (72 aa).

Residues 1–72 (MAKEEAIEIE…TKGRITYRYK (72 aa)) enclose the S1-like domain.

Belongs to the IF-1 family. In terms of assembly, component of the 30S ribosomal translation pre-initiation complex which assembles on the 30S ribosome in the order IF-2 and IF-3, IF-1 and N-formylmethionyl-tRNA(fMet); mRNA recruitment can occur at any time during PIC assembly.

Its subcellular location is the cytoplasm. One of the essential components for the initiation of protein synthesis. Stabilizes the binding of IF-2 and IF-3 on the 30S subunit to which N-formylmethionyl-tRNA(fMet) subsequently binds. Helps modulate mRNA selection, yielding the 30S pre-initiation complex (PIC). Upon addition of the 50S ribosomal subunit IF-1, IF-2 and IF-3 are released leaving the mature 70S translation initiation complex. This is Translation initiation factor IF-1 from Chlorobium phaeobacteroides (strain DSM 266 / SMG 266 / 2430).